A 308-amino-acid chain; its full sequence is Secreted frizzled-related protein 1 (308 aa).

The first 25 residues, 1–25 (MGGGRWAAAGALLALAAGLLAAGSA), serve as a signal peptide directing secretion. Positions 47–163 (TKPPQCVDIP…FPEGDVCIAM (117 aa)) constitute an FZ domain. 5 disulfides stabilise this stretch: C52–C115, C62–C108, C99–C134, C123–C160, and C127–C151. N-linked (GlcNAc...) asparagine glycosylation is present at N167. Cystine bridges form between C180–C250, C183–C252, and C197–C300. The NTR domain maps to 180–300 (CPPCDNELKS…FMKKMKNHEC (121 aa)).

The protein belongs to the secreted frizzled-related protein (sFRP) family. In terms of assembly, interacts with WNT1, WNT2, WNT4, WNT8, MYOC and FRZD6. Highest levels in aortic endothelium, heart, spleen and eye. Lower levels in lung, brain and kidney. Weak expression in liver, skeletal muscle and the medial layer of the aorta. In the cortical brain, localized to neurons and small blood vessels. In the retina, localized to the inner and outer nuclear layers with high expression in the neuronal cell bodies. In the heart, restricted to myocytes. In lung, highest expression found in the epithelium of terminal bronchioles. In kidney, localized to the epithelium of collecting ducts of the medulla and, in spleen, expression restricted to the red pulp in cells associated with the sinuses.

It localises to the secreted. In terms of biological role, soluble frizzled-related proteins (sFRPS) function as modulators of Wnt signaling through direct interaction with Wnts. They have a role in regulating cell growth and differentiation in specific cell types. SFRP1 decreases intracellular beta-catenin levels. Has antiproliferative effects on vascular cells, in vitro and in vivo, and can induce, in vivo, an angiogenic response. In vascular cell cycle, delays the G1 phase and entry into the S phase. In kidney development, inhibits tubule formation and bud growth in metanephroi. Inhibits WNT1/WNT4-mediated TCF-dependent transcription. This Bos taurus (Bovine) protein is Secreted frizzled-related protein 1 (SFRP1).